Reading from the N-terminus, the 143-residue chain is Nucleoside diphosphate kinase (143 aa).

6 residues coordinate ATP: lysine 11, phenylalanine 59, arginine 87, threonine 93, arginine 104, and asparagine 114. The active-site Pros-phosphohistidine intermediate is the histidine 117.

The protein belongs to the NDK family. As to quaternary structure, homotetramer. Mg(2+) is required as a cofactor.

It is found in the cytoplasm. The enzyme catalyses dZDP + ATP = dZTP + ADP. The catalysed reaction is a 2'-deoxyribonucleoside 5'-diphosphate + ATP = a 2'-deoxyribonucleoside 5'-triphosphate + ADP. It carries out the reaction a ribonucleoside 5'-diphosphate + ATP = a ribonucleoside 5'-triphosphate + ADP. It participates in purine metabolism. Major role in the synthesis of nucleoside triphosphates other than ATP. The ATP gamma phosphate is transferred to the NDP beta phosphate via a ping-pong mechanism, using a phosphorylated active-site intermediate. In terms of biological role, (Microbial infection) Catalyzes the phosphorylation of dZDP to dZTP, when the bacterium is infected by a phage that produces the substrate for the synthesis of dZTP (2- amino-2'-deoxyadenosine 5'-triphosphate), which is then used by the phage as a DNA polymerase substrate. This is Nucleoside diphosphate kinase from Salmonella paratyphi C (strain RKS4594).